The primary structure comprises 893 residues: Serine/threonine-protein kinase/endoribonuclease IRE1 (893 aa).

Positions 1–19 (MRSLRRVLLQLVLLAGVAF) are cleaved as a signal peptide. Topologically, residues 20–379 (RGVRFDDAAD…NSVTKFSYRW (360 aa)) are lumenal. 4 N-linked (GlcNAc...) asparagine glycosylation sites follow: N105, N158, N259, and N351. The chain crosses the membrane as a helical span at residues 380–397 (LFPTFLMLLIMACLVKLA). The Cytoplasmic segment spans residues 398-893 (DASKYCRQFV…FSKYFLGSSA (496 aa)). Positions 451–478 (ASDKEGNGTGGSTEAQSNKAHDSTNVEL) are disordered. Residues 491 to 759 (CVYSKEIGKG…AVYVMHHPFF (269 aa)) enclose the Protein kinase domain. Residues 497 to 505 (IGKGSNGTV) and K519 each bind ATP. The Proton acceptor role is filled by D625. A KEN domain is found at 762–890 (PELCLSFLRD…EEAFSKYFLG (129 aa)).

This sequence belongs to the protein kinase superfamily. Ser/Thr protein kinase family. In terms of assembly, homodimer; disulfide-linked. Dimer formation is driven by hydrophobic interactions within the N-terminal luminal domains and stabilized by disulfide bridges. In terms of processing, autophosphorylated. In terms of tissue distribution, expressed in roots, nodes, internodes, leaf sheaths, leaf blades, young ears and mature ears.

It localises to the endoplasmic reticulum membrane. It catalyses the reaction L-seryl-[protein] + ATP = O-phospho-L-seryl-[protein] + ADP + H(+). The catalysed reaction is L-threonyl-[protein] + ATP = O-phospho-L-threonyl-[protein] + ADP + H(+). Its function is as follows. Involved in endoplasmic reticulum (ER) stress response. Senses unfolded proteins in the lumen of the ER via its N-terminal domain which leads to enzyme auto-activation. The active endoribonuclease domain splices bZIP50 mRNA to generate a new C-terminus, converting it into a potent unfolded-protein response (UPR) transcriptional activator, which then induces transcription of UPR target genes, such as luminal-binding protein (BiP) chaperones. This Oryza sativa subsp. japonica (Rice) protein is Serine/threonine-protein kinase/endoribonuclease IRE1.